The chain runs to 319 residues: ATP-dependent 6-phosphofructokinase (319 aa).

Glycine 11 lines the ATP pocket. 21–25 (RSIAR) contributes to the ADP binding site. ATP is bound by residues 72 to 73 (RC) and 102 to 105 (GDGS). Aspartate 103 provides a ligand contact to Mg(2+). 125 to 127 (TID) serves as a coordination point for substrate. The active-site Proton acceptor is aspartate 127. An ADP-binding site is contributed by arginine 154. Substrate-binding positions include arginine 162 and 169 to 171 (MGR). ADP-binding positions include 185 to 187 (GAE), arginine 211, and 213 to 215 (KLH). Residues glutamate 222, lysine 243, and 249–252 (HVQR) contribute to the substrate site.

Belongs to the phosphofructokinase type A (PFKA) family. ATP-dependent PFK group I subfamily. Prokaryotic clade 'B1' sub-subfamily. In terms of assembly, homotetramer. The cofactor is Mg(2+).

It is found in the cytoplasm. It catalyses the reaction beta-D-fructose 6-phosphate + ATP = beta-D-fructose 1,6-bisphosphate + ADP + H(+). It functions in the pathway carbohydrate degradation; glycolysis; D-glyceraldehyde 3-phosphate and glycerone phosphate from D-glucose: step 3/4. Its activity is regulated as follows. Allosterically activated by ADP and other diphosphonucleosides, and allosterically inhibited by phosphoenolpyruvate. In terms of biological role, catalyzes the phosphorylation of D-fructose 6-phosphate to fructose 1,6-bisphosphate by ATP, the first committing step of glycolysis. The polypeptide is ATP-dependent 6-phosphofructokinase (Finegoldia magna (strain ATCC 29328 / DSM 20472 / WAL 2508) (Peptostreptococcus magnus)).